The primary structure comprises 126 residues: Holo-[acyl-carrier-protein] synthase (126 aa).

Mg(2+) contacts are provided by Asp-9 and Glu-58.

Belongs to the P-Pant transferase superfamily. AcpS family. Mg(2+) is required as a cofactor.

The protein resides in the cytoplasm. It catalyses the reaction apo-[ACP] + CoA = holo-[ACP] + adenosine 3',5'-bisphosphate + H(+). In terms of biological role, transfers the 4'-phosphopantetheine moiety from coenzyme A to a Ser of acyl-carrier-protein. This is Holo-[acyl-carrier-protein] synthase from Salmonella paratyphi B (strain ATCC BAA-1250 / SPB7).